The chain runs to 65 residues: Large ribosomal subunit protein bL35 (65 aa).

The segment at 1–28 (MPKMKTNRSAAKRFGKTGSGKFTRRRQN) is disordered.

This sequence belongs to the bacterial ribosomal protein bL35 family.

This is Large ribosomal subunit protein bL35 from Solidesulfovibrio magneticus (strain ATCC 700980 / DSM 13731 / RS-1) (Desulfovibrio magneticus).